A 358-amino-acid chain; its full sequence is DNA replication and repair protein RecF (358 aa).

ATP is bound at residue Gly-30–Thr-37.

Belongs to the RecF family.

It localises to the cytoplasm. In terms of biological role, the RecF protein is involved in DNA metabolism; it is required for DNA replication and normal SOS inducibility. RecF binds preferentially to single-stranded, linear DNA. It also seems to bind ATP. This is DNA replication and repair protein RecF from Acinetobacter baylyi (strain ATCC 33305 / BD413 / ADP1).